Here is a 290-residue protein sequence, read N- to C-terminus: UPF0761 membrane protein YihY (290 aa).

Topologically, residues 1–43 (MLKTVHQKAGRHTRPVRAWLKLLWQRIDEDNMTTLAGNLAYVS) are cytoplasmic. A helical transmembrane segment spans residues 44–64 (LLSLVPLIAVVFALFAAFPMF). Residues 65 to 103 (SDVSIQLRHFIFANFMPATGDVIQRYIEQFVANSNKMTA) are Periplasmic-facing. Residues 104 to 124 (VGACGLIVTALLLMYAIDSAL) traverse the membrane as a helical segment. Residues 125-139 (NTIWRSKRTRPKVYS) lie on the Cytoplasmic side of the membrane. The chain crosses the membrane as a helical span at residues 140–160 (FAVYWMILTLGPLLAGVSLAI). Topologically, residues 161–179 (SSYLLSLRWASDLNTVIDN) are periplasmic. A helical transmembrane segment spans residues 180 to 200 (VLHILPLLLSWISFWLLYSIV). Topologically, residues 201–209 (PTTRVPNRD) are cytoplasmic. A helical membrane pass occupies residues 210 to 230 (ALVGAFVAALLFEAGKKGFAL). Topologically, residues 231 to 243 (YITMFPSYQLIYG) are periplasmic. The chain crosses the membrane as a helical span at residues 244 to 264 (VLAVIPILFVWVYWTWCIVLL). Over 265-290 (GAEITVTLGEYRKLKQAAEQEEADQP) the chain is Cytoplasmic.

This sequence belongs to the UPF0761 family.

It is found in the cell inner membrane. This is UPF0761 membrane protein YihY from Salmonella typhimurium (strain LT2 / SGSC1412 / ATCC 700720).